The chain runs to 357 residues: Prostaglandin D2 receptor-like (357 aa).

Topologically, residues 1–20 (MNESYRCQAATWVERGSSAT) are extracellular. Asn2 carries an N-linked (GlcNAc...) asparagine glycan. Residues 21 to 41 (MGGVLFSAGLLGNLLALVLLA) traverse the membrane as a helical segment. Residues 42-57 (RSGLGSCRPGPLHPPP) lie on the Cytoplasmic side of the membrane. A helical membrane pass occupies residues 58–78 (SVFYVLVCGLTVTHLLGKCLI). The Extracellular segment spans residues 79 to 106 (SPMVLAAYAQNRSLKELLPASGNQLCEA). Asn89 is a glycosylation site (N-linked (GlcNAc...) asparagine). Cys104 and Cys182 form a disulfide bridge. A helical transmembrane segment spans residues 107–127 (FAFLMSFFGLASTLQLLAMAL). The Cytoplasmic segment spans residues 128–149 (ECWLSLGHPFFYQRHITARRGV). The chain crosses the membrane as a helical span at residues 150–170 (LVAPVAGAFSLAFCALPFAGF). Residues 171 to 194 (GKFVQYCPGTWCFIQMIHKKRSFS) lie on the Extracellular side of the membrane. A helical transmembrane segment spans residues 195–215 (VIGFSVLYSSLMALLVLATVV). At 216 to 261 (CNLGAMSNLYAMHRRQRHHPRRCSRDRAQSGSDYRHGSPNPLEELD) the chain is on the cytoplasmic side. Residues 262-282 (HFVLLALTTVLFTMCSLPLIY) form a helical membrane-spanning segment. The Extracellular portion of the chain corresponds to 283–306 (RAYYGAFKLVDRADGDSEDLQALR). A helical membrane pass occupies residues 307–327 (FLSVISIVDPWIFIIFRTSVF). Residues 328 to 357 (RMLFHKAFTRPLIYRNWCSHSWQTNMESTL) lie on the Cytoplasmic side of the membrane.

This sequence belongs to the G-protein coupled receptor 1 family. As to expression, strongly expressed in eye and gastrointestinal tract (GIT), moderately in the brain and oviduct and weakly in the epididymis. In the eye, expressed in the epithelium of the iris and ciliary body and in photoreceptor cells of the retina. In the brain, expressed in leptomeninges, choroid plexus and spinal cord (sensory and motor neurons of the dorsal and ventral horns). In the stomach, expressed in the mucous-secreting goblet cells and the columnar epithelium. Expressed in platelets.

It localises to the cell membrane. Receptor for prostaglandin D2 (PGD2). The activity of this receptor is mainly mediated by G(s) proteins that stimulate adenylate cyclase, resulting in an elevation of intracellular cAMP. A mobilization of calcium is also observed, but without formation of inositol 1,4,5-trisphosphate. The chain is Prostaglandin D2 receptor-like (Ptgdrl) from Rattus norvegicus (Rat).